The chain runs to 332 residues: uncharacterized protein (332 aa).

The helical transmembrane segment at 27–47 (CAIVFLCVLLILPFLSCCTSL) threads the bilayer.

It is found in the membrane. This is an uncharacterized protein from Treponema pallidum (strain Nichols).